The primary structure comprises 394 residues: 8-amino-7-oxononanoate synthase (394 aa).

Substrate is bound at residue arginine 18. Glycine 105–tyrosine 106 provides a ligand contact to pyridoxal 5'-phosphate. Histidine 130 is a substrate binding site. Pyridoxal 5'-phosphate-binding residues include serine 175, histidine 203, and threonine 232. The residue at position 235 (lysine 235) is an N6-(pyridoxal phosphate)lysine. Threonine 349 is a substrate binding site.

Belongs to the class-II pyridoxal-phosphate-dependent aminotransferase family. BioF subfamily. Homodimer. It depends on pyridoxal 5'-phosphate as a cofactor.

It carries out the reaction 6-carboxyhexanoyl-[ACP] + L-alanine + H(+) = (8S)-8-amino-7-oxononanoate + holo-[ACP] + CO2. It participates in cofactor biosynthesis; biotin biosynthesis. In terms of biological role, catalyzes the decarboxylative condensation of pimeloyl-[acyl-carrier protein] and L-alanine to produce 8-amino-7-oxononanoate (AON), [acyl-carrier protein], and carbon dioxide. The protein is 8-amino-7-oxononanoate synthase of Marinobacter nauticus (strain ATCC 700491 / DSM 11845 / VT8) (Marinobacter aquaeolei).